Here is a 284-residue protein sequence, read N- to C-terminus: Nucleotide-binding protein Sputw3181_3461 (284 aa).

Residue 8–15 (GRSGSGKS) coordinates ATP. 56–59 (DVRN) contacts GTP.

The protein belongs to the RapZ-like family.

In terms of biological role, displays ATPase and GTPase activities. The sequence is that of Nucleotide-binding protein Sputw3181_3461 from Shewanella sp. (strain W3-18-1).